The primary structure comprises 318 residues: Pantothenate kinase (318 aa).

Residue 96–103 (GSVAVGKS) coordinates ATP.

Belongs to the prokaryotic pantothenate kinase family.

It is found in the cytoplasm. It carries out the reaction (R)-pantothenate + ATP = (R)-4'-phosphopantothenate + ADP + H(+). It functions in the pathway cofactor biosynthesis; coenzyme A biosynthesis; CoA from (R)-pantothenate: step 1/5. The protein is Pantothenate kinase of Rhodopseudomonas palustris (strain BisA53).